A 120-amino-acid polypeptide reads, in one-letter code: MARIAGVDLPKKKRVEYALTYIYGIGLKSSREILEAVGISFDKRVHELSEDEASSIAKKIQQSYLVEGDLRKKVQMDIKSLMDLGNYRGIRHRKGLPVRGQTTKNNARTRKGKKKTVGSK.

Residues 93–120 (RKGLPVRGQTTKNNARTRKGKKKTVGSK) are disordered. A compositionally biased stretch (basic residues) spans 107-120 (ARTRKGKKKTVGSK).

The protein belongs to the universal ribosomal protein uS13 family. As to quaternary structure, part of the 30S ribosomal subunit. Forms a loose heterodimer with protein S19. Forms two bridges to the 50S subunit in the 70S ribosome.

Functionally, located at the top of the head of the 30S subunit, it contacts several helices of the 16S rRNA. In the 70S ribosome it contacts the 23S rRNA (bridge B1a) and protein L5 of the 50S subunit (bridge B1b), connecting the 2 subunits; these bridges are implicated in subunit movement. Contacts the tRNAs in the A and P-sites. This is Small ribosomal subunit protein uS13 from Helicobacter acinonychis (strain Sheeba).